The sequence spans 340 residues: PRKC apoptosis WT1 regulator protein (340 aa).

Over residues 1–18 (MATGGYRTSSGLGGSTTD) the composition is skewed to polar residues. Residues 1-253 (MATGGYRTSS…TDRSGFPRYN (253 aa)) form a disordered region. Low complexity predominate over residues 47-82 (SDAAGKPPAGALGTPAAAAANELNNNLPGGAPAAPA). The B30.2/SPRY domain-binding motif motif lies at 68–72 (ELNNN). Phosphoserine is present on serine 108. Positions 145 to 161 (RKGKGQIEKRKLREKRR) match the Nuclear localization signal motif. The tract at residues 145–203 (RKGKGQIEKRKLREKRRSTGVVNIPAAECLDEYEDDEAGQKERKREDAITQQNTIQNEA) is selective for apoptosis induction in cancer cells (SAC). Residue threonine 163 is modified to Phosphothreonine; by PKA. Positions 182–192 (AGQKERKREDA) are enriched in basic and acidic residues. Residues 186–206 (ERKREDAITQQNTIQNEAVNL) are a coiled coil. The span at 193 to 203 (ITQQNTIQNEA) shows a compositional bias: polar residues. At serine 231 the chain carries Phosphoserine. Residues 242–253 (SRTDRSGFPRYN) are compositionally biased toward basic and acidic residues. The leucine-zipper stretch occupies residues 300–340 (IGKLKEEIDLLNRDLDDIEDENEQLKQENKTLLKVVGQLTR).

Homooligomer. Interacts (via the C-terminal region) with WT1. Interacts with THAP1. Interacts with AATF. Interacts with BACE1. Interacts with SPSB1 (via B30.2/SPRY domain); this interaction is direct and occurs in association with the Elongin BC complex. Interacts with SPSB2 (via B30.2/SPRY domain); this interaction occurs in association with the Elongin BC complex. Interacts with SPSB4 (via B30.2/SPRY domain); this interaction occurs in association with the Elongin BC complex. Component of a ternary complex composed of SQSTM1 and PRKCZ. Interacts with actin. Preferentially phosphorylated at the Thr-163 by PKC in cancer cells. In terms of tissue distribution, widely expressed. Expression is elevated in various neurodegenerative diseases such as amyotrophic lateral sclerosis, Alzheimer, Parkinson and Huntington diseases and stroke. Down-regulated in several cancers.

Its subcellular location is the cytoplasm. The protein localises to the nucleus. Its function is as follows. Pro-apoptotic protein capable of selectively inducing apoptosis in cancer cells, sensitizing the cells to diverse apoptotic stimuli and causing regression of tumors in animal models. Induces apoptosis in certain cancer cells by activation of the Fas prodeath pathway and coparallel inhibition of NF-kappa-B transcriptional activity. Inhibits the transcriptional activation and augments the transcriptional repression mediated by WT1. Down-regulates the anti-apoptotic protein BCL2 via its interaction with WT1. Also seems to be a transcriptional repressor by itself. May be directly involved in regulating the amyloid precursor protein (APP) cleavage activity of BACE1. The sequence is that of PRKC apoptosis WT1 regulator protein (PAWR) from Homo sapiens (Human).